A 323-amino-acid chain; its full sequence is Serine/threonine-protein phosphatase PP1-gamma catalytic subunit (323 aa).

Alanine 2 carries the N-acetylalanine modification. 4 residues coordinate Mn(2+): aspartate 64, histidine 66, aspartate 92, and asparagine 124. Histidine 125 functions as the Proton donor in the catalytic mechanism. Residues histidine 173 and histidine 248 each coordinate Mn(2+). Phosphothreonine occurs at positions 307 and 311.

It belongs to the PPP phosphatase family. PP-1 subfamily. As to quaternary structure, PP1 comprises a catalytic subunit, PPP1CA, PPP1CB or PPP1CC, which is folded into its native form by inhibitor 2 and glycogen synthetase kinase 3, and then complexed to one or several targeting or regulatory subunits. PPP1R12A, PPP1R12B and PPP1R12C mediate binding to myosin. PPP1R3A (in skeletal muscle), PPP1R3B (in liver), PPP1R3C, PPP1R3D and PPP1R3F (in brain) mediate binding to glycogen. PPP1R15A and PPP1R15B mediate binding to EIF2S1. Part of a complex containing PPP1R15B, PP1 and NCK1/2. Interacts with PPP1R3B, PPP1R7 and CDCA2. Interacts with IKFZ1; the interaction targets PPP1CC to pericentromeric heterochromatin, dephosphorylates IKAROS, stabilizes it and prevents it from degradation. Interacts with NOM1 and PPP1R8. Component of the PTW/PP1 phosphatase complex, composed of PPP1R10/PNUTS, TOX4, WDR82, and PPP1CA or PPP1CB or PPP1CC. Interacts with PPP1R8. Interacts with NEK2. Interacts with PPP1R42; the interaction is direct. Interacts with URI1; the interaction is phosphorylation-dependent and occurs in a growth factor-dependent manner. Interacts with FOXP3. Interacts with TMEM225 (via RVxF motif). Interacts with MKI67. Interacts with RRP1B; this targets PPP1CC to the nucleolus. Interacts with DYNLT4. Interacts (via RVxF motif) with FIRRM; regulates PLK1 kinase activity. Interacts with the KNL1 complex subunit KNL1; the interaction is direct and mutually exclusive with KNL1 binding to microtubules. Component of the SHOC2-MRAS-PP1c (SMP) complex consisting of SHOC2, GTP-bound M-Ras/MRAS and the catalytic subunit of protein phosphatase 1 (either PPP1CA, PPP1CB or PPP1CC). SHOC2 and PP1c preferably bind M-Ras/MRAS, but they also bind K-Ras/KRAS, N-Ras/NRAS and H-Ras/HRAS; these interactions are GTP-dependent and both SHOC2 and PP1c are required to form a stable complex. Interacts with SHOC2 in the absence of Ras GTPases. Requires Mn(2+) as cofactor. Phosphorylated by NEK2.

It localises to the cytoplasm. The protein resides in the nucleus. Its subcellular location is the cleavage furrow. It is found in the nucleolus. The protein localises to the nucleoplasm. It localises to the chromosome. The protein resides in the centromere. Its subcellular location is the kinetochore. It is found in the nucleus speckle. The protein localises to the midbody. It localises to the mitochondrion. The protein resides in the cytoskeleton. Its subcellular location is the microtubule organizing center. The catalysed reaction is O-phospho-L-seryl-[protein] + H2O = L-seryl-[protein] + phosphate. It carries out the reaction O-phospho-L-threonyl-[protein] + H2O = L-threonyl-[protein] + phosphate. Its activity is regulated as follows. Inactivated by binding to URI1. Functionally, protein phosphatase that associates with over 200 regulatory proteins to form highly specific holoenzymes which dephosphorylate hundreds of biological targets. Protein phosphatase 1 (PP1) is essential for cell division, and participates in the regulation of glycogen metabolism, muscle contractility and protein synthesis. Dephosphorylates RPS6KB1. Involved in regulation of ionic conductances and long-term synaptic plasticity. May play an important role in dephosphorylating substrates such as the postsynaptic density-associated Ca(2+)/calmodulin dependent protein kinase II. Component of the PTW/PP1 phosphatase complex, which plays a role in the control of chromatin structure and cell cycle progression during the transition from mitosis into interphase. Regulates the recruitment of the SKA complex to kinetochores. Core component of the SHOC2-MRAS-PP1c (SMP) holophosphatase complex that regulates the MAPK pathway activation. Dephosphorylates MKI67 at the onset of anaphase. The SMP complex specifically dephosphorylates the inhibitory phosphorylation at 'Ser-259' of RAF1 kinase, 'Ser-365' of BRAF kinase and 'Ser-214' of ARAF kinase, stimulating their kinase activities. The SMP complex enhances the dephosphorylation activity and substrate specificity of PP1c. The sequence is that of Serine/threonine-protein phosphatase PP1-gamma catalytic subunit (PPP1CC) from Canis lupus familiaris (Dog).